The sequence spans 70 residues: DNA gyrase inhibitor YacG (70 aa).

Positions 7, 10, 26, and 30 each coordinate Zn(2+).

Belongs to the DNA gyrase inhibitor YacG family. As to quaternary structure, interacts with GyrB. It depends on Zn(2+) as a cofactor.

Functionally, inhibits all the catalytic activities of DNA gyrase by preventing its interaction with DNA. Acts by binding directly to the C-terminal domain of GyrB, which probably disrupts DNA binding by the gyrase. This chain is DNA gyrase inhibitor YacG, found in Shewanella woodyi (strain ATCC 51908 / MS32).